Reading from the N-terminus, the 88-residue chain is MKKDIHPDYHAVVFQDAGTGFQFLTKSTASSDRTVSWEDGNEYPLIVVDVTSESHPFWTGAQRVMDTAGRVEKFERRFGGMARRKKKA.

It belongs to the bacterial ribosomal protein bL31 family. Type B subfamily. As to quaternary structure, part of the 50S ribosomal subunit.

In Corynebacterium glutamicum (strain R), this protein is Large ribosomal subunit protein bL31B.